Here is a 180-residue protein sequence, read N- to C-terminus: V-type proton ATPase subunit c''1 (180 aa).

The Lumenal segment spans residues 1–26 (MSGVVALGHASSWGAALVRISPYTFS). Residues 27–47 (AIGIAISIGVSVLGAAWGIYI) form a helical membrane-spanning segment. Residues 48–66 (TGSSLIGAAIEAPRITSKN) lie on the Cytoplasmic side of the membrane. A helical membrane pass occupies residues 67–87 (LISVIFCEAVAIYGVIVAIIL). Over 88-110 (QTKLESVPSSKMYDAESLRAGYA) the chain is Lumenal. A helical transmembrane segment spans residues 111–131 (IFASGIIVGFANLVCGLCVGI). Over 132-149 (IGSSCALSDAQNSTLFVK) the chain is Cytoplasmic. The helical transmembrane segment at 150–170 (ILVIEIFGSALGLFGVIVGII) threads the bilayer. The Lumenal segment spans residues 171–180 (MSAQATWPTK).

Belongs to the V-ATPase proteolipid subunit family. V-ATPase is a heteromultimeric enzyme composed of a peripheral catalytic V1 complex (components A to H) attached to an integral membrane V0 proton pore complex (components: a, c, c'', d and e). The proteolipid components c and c'' are present as a hexameric ring that forms the proton-conducting pore. In terms of tissue distribution, preferentially expressed in roots.

Its subcellular location is the endoplasmic reticulum membrane. It localises to the golgi apparatus membrane. Functionally, proton-conducting pore forming subunit of the membrane integral V0 complex of vacuolar ATPase. V-ATPase is responsible for acidifying a variety of intracellular compartments in eukaryotic cells. The chain is V-type proton ATPase subunit c''1 (VHA-c''1) from Arabidopsis thaliana (Mouse-ear cress).